A 427-amino-acid chain; its full sequence is Peptidase B (427 aa).

Mn(2+) contacts are provided by K195 and D200. Residue K207 is part of the active site. Mn(2+)-binding residues include D218, D277, and E279. Residue R281 is part of the active site.

Belongs to the peptidase M17 family. Homohexamer. Requires Mn(2+) as cofactor.

It is found in the cytoplasm. It carries out the reaction Release of an N-terminal amino acid, Xaa, from a peptide or arylamide. Xaa is preferably Glu or Asp but may be other amino acids, including Leu, Met, His, Cys and Gln.. In terms of biological role, probably plays an important role in intracellular peptide degradation. This chain is Peptidase B, found in Escherichia fergusonii (strain ATCC 35469 / DSM 13698 / CCUG 18766 / IAM 14443 / JCM 21226 / LMG 7866 / NBRC 102419 / NCTC 12128 / CDC 0568-73).